Here is a 100-residue protein sequence, read N- to C-terminus: Succinate dehydrogenase subunit 7B, mitochondrial (100 aa).

The interval 1-25 (MAFLLNNASISSHLRSSSSQKTGDA) is disordered. Residues 1 to 32 (MAFLLNNASISSHLRSSSSQKTGDALSISRRG) constitute a mitochondrion transit peptide. Residues 9–19 (SISSHLRSSSS) are compositionally biased toward low complexity.

In terms of assembly, component of complex II composed of eight subunits in plants: four classical SDH subunits SDH1, SDH2, SDH3 and SDH4 (a flavoprotein (FP), an iron-sulfur protein (IP), and a cytochrome b composed of a large and a small subunit.), as well as four subunits unknown in mitochondria from bacteria and heterotrophic eukaryotes.

The protein resides in the mitochondrion inner membrane. The protein operates within carbohydrate metabolism; tricarboxylic acid cycle. The polypeptide is Succinate dehydrogenase subunit 7B, mitochondrial (Arabidopsis thaliana (Mouse-ear cress)).